Here is a 144-residue protein sequence, read N- to C-terminus: Deoxyuridine 5'-triphosphate nucleotidohydrolase (144 aa).

Substrate is bound by residues 63-65 (RSG), Asn-76, and 80-82 (TID).

This sequence belongs to the dUTPase family. Mg(2+) serves as cofactor.

The enzyme catalyses dUTP + H2O = dUMP + diphosphate + H(+). It functions in the pathway pyrimidine metabolism; dUMP biosynthesis; dUMP from dCTP (dUTP route): step 2/2. Its function is as follows. This enzyme is involved in nucleotide metabolism: it produces dUMP, the immediate precursor of thymidine nucleotides and it decreases the intracellular concentration of dUTP so that uracil cannot be incorporated into DNA. The polypeptide is Deoxyuridine 5'-triphosphate nucleotidohydrolase (Phocaeicola vulgatus (strain ATCC 8482 / DSM 1447 / JCM 5826 / CCUG 4940 / NBRC 14291 / NCTC 11154) (Bacteroides vulgatus)).